The chain runs to 328 residues: 4-hydroxy-3-methylbut-2-enyl diphosphate reductase (328 aa).

Residue Cys-13 participates in [4Fe-4S] cluster binding. (2E)-4-hydroxy-3-methylbut-2-enyl diphosphate contacts are provided by His-41 and His-75. Dimethylallyl diphosphate is bound by residues His-41 and His-75. Isopentenyl diphosphate is bound by residues His-41 and His-75. Residue Cys-97 participates in [4Fe-4S] cluster binding. Position 125 (His-125) interacts with (2E)-4-hydroxy-3-methylbut-2-enyl diphosphate. His-125 lines the dimethylallyl diphosphate pocket. An isopentenyl diphosphate-binding site is contributed by His-125. Catalysis depends on Glu-127, which acts as the Proton donor. Thr-168 lines the (2E)-4-hydroxy-3-methylbut-2-enyl diphosphate pocket. Residue Cys-229 participates in [4Fe-4S] cluster binding. Residues Ser-257, Ser-258, Asn-259, and Ser-306 each coordinate (2E)-4-hydroxy-3-methylbut-2-enyl diphosphate. Dimethylallyl diphosphate-binding residues include Ser-257, Ser-258, Asn-259, and Ser-306. The isopentenyl diphosphate site is built by Ser-257, Ser-258, Asn-259, and Ser-306.

It belongs to the IspH family. [4Fe-4S] cluster serves as cofactor.

The enzyme catalyses isopentenyl diphosphate + 2 oxidized [2Fe-2S]-[ferredoxin] + H2O = (2E)-4-hydroxy-3-methylbut-2-enyl diphosphate + 2 reduced [2Fe-2S]-[ferredoxin] + 2 H(+). The catalysed reaction is dimethylallyl diphosphate + 2 oxidized [2Fe-2S]-[ferredoxin] + H2O = (2E)-4-hydroxy-3-methylbut-2-enyl diphosphate + 2 reduced [2Fe-2S]-[ferredoxin] + 2 H(+). Its pathway is isoprenoid biosynthesis; dimethylallyl diphosphate biosynthesis; dimethylallyl diphosphate from (2E)-4-hydroxy-3-methylbutenyl diphosphate: step 1/1. It functions in the pathway isoprenoid biosynthesis; isopentenyl diphosphate biosynthesis via DXP pathway; isopentenyl diphosphate from 1-deoxy-D-xylulose 5-phosphate: step 6/6. In terms of biological role, catalyzes the conversion of 1-hydroxy-2-methyl-2-(E)-butenyl 4-diphosphate (HMBPP) into a mixture of isopentenyl diphosphate (IPP) and dimethylallyl diphosphate (DMAPP). Acts in the terminal step of the DOXP/MEP pathway for isoprenoid precursor biosynthesis. This chain is 4-hydroxy-3-methylbut-2-enyl diphosphate reductase, found in Chlorobium phaeobacteroides (strain DSM 266 / SMG 266 / 2430).